Consider the following 226-residue polypeptide: Leucyl/phenylalanyl-tRNA--protein transferase (226 aa).

This sequence belongs to the L/F-transferase family.

The protein resides in the cytoplasm. The catalysed reaction is N-terminal L-lysyl-[protein] + L-leucyl-tRNA(Leu) = N-terminal L-leucyl-L-lysyl-[protein] + tRNA(Leu) + H(+). It carries out the reaction N-terminal L-arginyl-[protein] + L-leucyl-tRNA(Leu) = N-terminal L-leucyl-L-arginyl-[protein] + tRNA(Leu) + H(+). It catalyses the reaction L-phenylalanyl-tRNA(Phe) + an N-terminal L-alpha-aminoacyl-[protein] = an N-terminal L-phenylalanyl-L-alpha-aminoacyl-[protein] + tRNA(Phe). Its function is as follows. Functions in the N-end rule pathway of protein degradation where it conjugates Leu, Phe and, less efficiently, Met from aminoacyl-tRNAs to the N-termini of proteins containing an N-terminal arginine or lysine. This is Leucyl/phenylalanyl-tRNA--protein transferase from Pseudomonas putida (strain W619).